The following is a 220-amino-acid chain: Phosphopantothenoylcysteine decarboxylase (220 aa).

FMN is bound by residues 29–31 and 54–56; these read GSV and TKA. The Proton donor role is filled by histidine 91. FMN contacts are provided by residues 107–110 and alanine 141; that span reads SANT. N-[(R)-4-phosphopantothenoyl]-L-cysteine contacts are provided by asparagine 143, arginine 173, and alanine 175. Cysteine 176 acts as the Proton donor in catalysis. Methionine 184 contributes to the N-[(R)-4-phosphopantothenoyl]-L-cysteine binding site.

This sequence belongs to the HFCD (homooligomeric flavin containing Cys decarboxylase) superfamily. In terms of assembly, forms homotrimers. Interacts with HIP1. Interacts with HD1 in the dark. FMN serves as cofactor. In terms of tissue distribution, expressed in root meristem, shoot apical meristem (SAM), intercalary meristem, floral meristem, embryo and tip of the coleoptile before true leaf emergence.

The protein localises to the nucleus. The enzyme catalyses N-[(R)-4-phosphopantothenoyl]-L-cysteine + H(+) = (R)-4'-phosphopantetheine + CO2. The protein operates within cofactor biosynthesis; coenzyme A biosynthesis; CoA from (R)-pantothenate: step 3/5. Functionally, catalyzes the decarboxylation of 4'-phosphopantothenoylcysteine to 4'-phosphopantetheine, a key step in coenzyme A biosynthesis. Involved in salt and osmotic tolerance, and light-regulated plant growth. Trimerization of HAL3 recruits and activates the E3 ubiquitin-protein ligase HIP1, which leads to the degradation of cell cycle suppressors, resulting in enhancement of cell division and plant growth. HAL3 function in cell division seems to be independent from its PPC decarboxylase activity. Acts as a positive regulator of flowering by binding to HD1 in the dark. This is Phosphopantothenoylcysteine decarboxylase from Oryza sativa subsp. japonica (Rice).